The chain runs to 78 residues: MEFKNQVYGIIAEVCQDDVVKENPEIAIFDEGLLDSFGTVELLMAIESQLGITVPITEFDRDVWDTPNHIAEQLAEMK.

The Carrier domain maps to 1–78 (MEFKNQVYGI…HIAEQLAEMK (78 aa)). Residue serine 36 is modified to O-(pantetheine 4'-phosphoryl)serine.

Belongs to the DltC family. In terms of processing, 4'-phosphopantetheine is transferred from CoA to a specific serine of apo-DCP.

Its subcellular location is the cytoplasm. It functions in the pathway cell wall biogenesis; lipoteichoic acid biosynthesis. Functionally, carrier protein involved in the D-alanylation of lipoteichoic acid (LTA). The loading of thioester-linked D-alanine onto DltC is catalyzed by D-alanine--D-alanyl carrier protein ligase DltA. The DltC-carried D-alanyl group is further transferred to cell membrane phosphatidylglycerol (PG) by forming an ester bond, probably catalyzed by DltD. D-alanylation of LTA plays an important role in modulating the properties of the cell wall in Gram-positive bacteria, influencing the net charge of the cell wall. The protein is D-alanyl carrier protein of Bacillus pumilus (strain SAFR-032).